We begin with the raw amino-acid sequence, 145 residues long: 3-hydroxyacyl-[acyl-carrier-protein] dehydratase FabZ (145 aa).

Histidine 48 is a catalytic residue.

This sequence belongs to the thioester dehydratase family. FabZ subfamily.

The protein resides in the cytoplasm. It catalyses the reaction a (3R)-hydroxyacyl-[ACP] = a (2E)-enoyl-[ACP] + H2O. Functionally, involved in unsaturated fatty acids biosynthesis. Catalyzes the dehydration of short chain beta-hydroxyacyl-ACPs and long chain saturated and unsaturated beta-hydroxyacyl-ACPs. The polypeptide is 3-hydroxyacyl-[acyl-carrier-protein] dehydratase FabZ (Geobacillus thermodenitrificans (strain NG80-2)).